The primary structure comprises 135 residues: Large ribosomal subunit protein mL54 (135 aa).

The N-terminal 14 residues, 1–14 (MAAAHLLRASRVWA), are a transit peptide targeting the mitochondrion.

Belongs to the mitochondrion-specific ribosomal protein mL54 family. As to quaternary structure, component of the mitochondrial ribosome large subunit (39S) which comprises a 16S rRNA and about 50 distinct proteins.

It is found in the mitochondrion. In Mus musculus (Mouse), this protein is Large ribosomal subunit protein mL54 (Mrpl54).